The primary structure comprises 478 residues: Serine hydroxymethyltransferase (478 aa).

(6S)-5,6,7,8-tetrahydrofolate contacts are provided by residues L161 and 165 to 167 (GHL). K273 carries the N6-(pyridoxal phosphate)lysine modification. A (6S)-5,6,7,8-tetrahydrofolate-binding site is contributed by E291.

The protein belongs to the SHMT family. As to quaternary structure, homodimer. Pyridoxal 5'-phosphate is required as a cofactor.

It localises to the cytoplasm. It catalyses the reaction (6R)-5,10-methylene-5,6,7,8-tetrahydrofolate + glycine + H2O = (6S)-5,6,7,8-tetrahydrofolate + L-serine. The protein operates within one-carbon metabolism; tetrahydrofolate interconversion. It participates in amino-acid biosynthesis; glycine biosynthesis; glycine from L-serine: step 1/1. Functionally, catalyzes the reversible interconversion of serine and glycine with tetrahydrofolate (THF) serving as the one-carbon carrier. This reaction serves as the major source of one-carbon groups required for the biosynthesis of purines, thymidylate, methionine, and other important biomolecules. Also exhibits THF-independent aldolase activity toward beta-hydroxyamino acids, producing glycine and aldehydes, via a retro-aldol mechanism. The polypeptide is Serine hydroxymethyltransferase (Salinispora tropica (strain ATCC BAA-916 / DSM 44818 / JCM 13857 / NBRC 105044 / CNB-440)).